The chain runs to 35 residues: Photosystem II reaction center protein T (35 aa).

A helical membrane pass occupies residues 3–23; sequence ALVYTFLLISTLGIIFFAIFF.

It belongs to the PsbT family. PSII is composed of 1 copy each of membrane proteins PsbA, PsbB, PsbC, PsbD, PsbE, PsbF, PsbH, PsbI, PsbJ, PsbK, PsbL, PsbM, PsbT, PsbY, PsbZ, Psb30/Ycf12, at least 3 peripheral proteins of the oxygen-evolving complex and a large number of cofactors. It forms dimeric complexes.

Its subcellular location is the plastid. It localises to the chloroplast thylakoid membrane. Functionally, found at the monomer-monomer interface of the photosystem II (PS II) dimer, plays a role in assembly and dimerization of PSII. PSII is a light-driven water plastoquinone oxidoreductase, using light energy to abstract electrons from H(2)O, generating a proton gradient subsequently used for ATP formation. In Welwitschia mirabilis (Tree tumbo), this protein is Photosystem II reaction center protein T.